We begin with the raw amino-acid sequence, 134 residues long: Fluoride-specific ion channel FluC 2 (134 aa).

4 consecutive transmembrane segments (helical) span residues 10 to 30 (LSAE…GALL), 43 to 63 (LLVN…PAAP), 67 to 87 (LLVG…MVDA), and 100 to 120 (FGLI…GFWL). 2 residues coordinate Na(+): Gly-75 and Thr-78.

Belongs to the fluoride channel Fluc/FEX (TC 1.A.43) family.

It localises to the cell inner membrane. It carries out the reaction fluoride(in) = fluoride(out). Na(+) is not transported, but it plays an essential structural role and its presence is essential for fluoride channel function. Functionally, fluoride-specific ion channel. Important for reducing fluoride concentration in the cell, thus reducing its toxicity. The polypeptide is Fluoride-specific ion channel FluC 2 (Synechococcus sp. (strain CC9902)).